A 226-amino-acid chain; its full sequence is MHLSSDEVVLWQSGFLKLNLTIVTTWAVMLLLAGGSWLITRRLSTGITISRWQSVLEIIVTMARRQIGEVGLQKPEKYLPFIATLFLFIATANLCTVIPGYEPPTGSLSTTAALALSVFIAVPLFGIAESGLVGYLKTYAEPTPIMLPFNIVGELTRTMALAVRLFGNMMSGDMILVILLTISPLVFPVLMNILGLLTGMVQAYIFSILATVYIAAATRTREKSTS.

5 consecutive transmembrane segments (helical) span residues Leu20–Thr40, Tyr78–Ile98, Ala113–Val133, Met174–Leu194, and Leu196–Ala216.

The protein belongs to the ATPase A chain family. In terms of assembly, F-type ATPases have 2 components, CF(1) - the catalytic core - and CF(0) - the membrane proton channel. CF(1) has five subunits: alpha(3), beta(3), gamma(1), delta(1), epsilon(1). CF(0) has four main subunits: a, b, b' and c.

It is found in the cell inner membrane. Functionally, key component of the proton channel; it plays a direct role in the translocation of protons across the membrane. The sequence is that of ATP synthase subunit a 1 from Chlorobaculum parvum (strain DSM 263 / NCIMB 8327) (Chlorobium vibrioforme subsp. thiosulfatophilum).